Consider the following 461-residue polypeptide: tRNA-splicing endonuclease subunit Sen2 (461 aa).

Disordered stretches follow at residues 140–176 (GAEQ…TSSP) and 190–210 (GDPA…DVKE). Over residues 144–176 (TGDSCDTVCPNTENTELSGQSSTDTGNIATSSP) the composition is skewed to polar residues. A compositionally biased stretch (basic and acidic residues) spans 201–210 (KEQEPADVKE). Catalysis depends on residues tyrosine 365, histidine 373, and lysine 412.

The protein belongs to the tRNA-intron endonuclease family. In terms of assembly, tRNA splicing endonuclease is a heterotetramer composed of SEN2, SEN15, SEN34/LENG5 and SEN54.

The protein resides in the nucleus. The enzyme catalyses pretRNA = a 3'-half-tRNA molecule with a 5'-OH end + a 5'-half-tRNA molecule with a 2',3'-cyclic phosphate end + an intron with a 2',3'-cyclic phosphate and a 5'-hydroxyl terminus.. Constitutes one of the two catalytic subunit of the tRNA-splicing endonuclease complex, a complex responsible for identification and cleavage of the splice sites in pre-tRNA. It cleaves pre-tRNA at the 5'- and 3'-splice sites to release the intron. The products are an intron and two tRNA half-molecules bearing 2',3'-cyclic phosphate and 5'-OH termini. There are no conserved sequences at the splice sites, but the intron is invariably located at the same site in the gene, placing the splice sites an invariant distance from the constant structural features of the tRNA body. Probably carries the active site for 5'-splice site cleavage. The tRNA splicing endonuclease is also involved in mRNA processing via its association with pre-mRNA 3'-end processing factors, establishing a link between pre-tRNA splicing and pre-mRNA 3'-end formation, suggesting that the endonuclease subunits function in multiple RNA-processing events. This Gallus gallus (Chicken) protein is tRNA-splicing endonuclease subunit Sen2 (TSEN2).